Here is a 130-residue protein sequence, read N- to C-terminus: Holo-[acyl-carrier-protein] synthase (130 aa).

2 residues coordinate Mg(2+): D9 and E58.

This sequence belongs to the P-Pant transferase superfamily. AcpS family. Mg(2+) is required as a cofactor.

It localises to the cytoplasm. The catalysed reaction is apo-[ACP] + CoA = holo-[ACP] + adenosine 3',5'-bisphosphate + H(+). Functionally, transfers the 4'-phosphopantetheine moiety from coenzyme A to a Ser of acyl-carrier-protein. This Mycobacterium marinum (strain ATCC BAA-535 / M) protein is Holo-[acyl-carrier-protein] synthase.